The sequence spans 62 residues: Keratin-associated protein 6-2 (62 aa).

The protein belongs to the KRTAP type 6 family. Interacts with hair keratins.

In the hair cortex, hair keratin intermediate filaments are embedded in an interfilamentous matrix, consisting of hair keratin-associated proteins (KRTAP), which are essential for the formation of a rigid and resistant hair shaft through their extensive disulfide bond cross-linking with abundant cysteine residues of hair keratins. The matrix proteins include the high-sulfur and high-glycine-tyrosine keratins. In Homo sapiens (Human), this protein is Keratin-associated protein 6-2 (KRTAP6-2).